The sequence spans 462 residues: Tubulin gamma-1 chain (462 aa).

142 to 148 (AGGTGSG) contributes to the GTP binding site.

Belongs to the tubulin family.

Its subcellular location is the cytoplasm. It localises to the cytoskeleton. The protein resides in the microtubule organizing center. It is found in the centrosome. Functionally, tubulin is the major constituent of microtubules. The gamma chain is found at microtubule organizing centers (MTOC) such as the spindle poles or the centrosome, suggesting that it is involved in the minus-end nucleation of microtubule assembly. This Euplotes crassus protein is Tubulin gamma-1 chain.